The following is a 1063-amino-acid chain: Endo-1,4-beta-xylanase 2 (1063 aa).

CBM-cenC domains lie at 5–146 (NIVM…GPAP), 183–313 (NIIK…LEGP), 348–482 (NHIF…IEGP), and 517–662 (NIVS…QGPS). Residues 711-1006 (SGATVKIRQT…NEAGKRFLEI (296 aa)) enclose the GH10 domain. The Proton donor role is filled by glutamate 840. Glutamate 941 acts as the Nucleophile in catalysis.

The protein belongs to the glycosyl hydrolase 10 (cellulase F) family.

The enzyme catalyses Endohydrolysis of (1-&gt;4)-beta-D-xylosidic linkages in xylans.. The protein operates within glycan degradation; xylan degradation. Binds to and hydrolyzes insoluble and soluble xylan substrates. The protein is Endo-1,4-beta-xylanase 2 of Arabidopsis thaliana (Mouse-ear cress).